Consider the following 530-residue polypeptide: Tegument protein UL21 homolog (530 aa).

The protein belongs to the alphaherpesvirinae UL21 protein family. In terms of assembly, interacts (via C-terminus) with UL16.

It localises to the virion tegument. The protein resides in the host cytoplasm. It is found in the host nucleus. Its function is as follows. May participate in DNA packaging/capsid maturation events. Promotes efficient incorporation of tegument proteins UL46, UL49, and US3 homologs into virions. May also play a role in capsid transport to the trans-Golgi network (TGN). The chain is Tegument protein UL21 homolog from Equus caballus (Horse).